A 182-amino-acid chain; its full sequence is Ribosome-recycling factor (182 aa).

It belongs to the RRF family.

It localises to the cytoplasm. Functionally, responsible for the release of ribosomes from messenger RNA at the termination of protein biosynthesis. May increase the efficiency of translation by recycling ribosomes from one round of translation to another. The sequence is that of Ribosome-recycling factor from Prochlorococcus marinus (strain MIT 9515).